Consider the following 693-residue polypeptide: Polyphosphate kinase (693 aa).

Asn-57 is a binding site for ATP. 2 residues coordinate Mg(2+): Arg-383 and Arg-413. His-443 acts as the Phosphohistidine intermediate in catalysis. The ATP site is built by Tyr-476, Arg-572, and His-601.

Belongs to the polyphosphate kinase 1 (PPK1) family. Mg(2+) is required as a cofactor. In terms of processing, an intermediate of this reaction is the autophosphorylated ppk in which a phosphate is covalently linked to a histidine residue through a N-P bond.

The enzyme catalyses [phosphate](n) + ATP = [phosphate](n+1) + ADP. Its function is as follows. Catalyzes the reversible transfer of the terminal phosphate of ATP to form a long-chain polyphosphate (polyP). This Acinetobacter baumannii (strain ATCC 17978 / DSM 105126 / CIP 53.77 / LMG 1025 / NCDC KC755 / 5377) protein is Polyphosphate kinase.